The following is a 73-amino-acid chain: Protein SlyX homolog (73 aa).

The tract at residues 54 to 73 (LQQAESNAPAAPANERPPHY) is disordered. The segment covering 57–67 (AESNAPAAPAN) has biased composition (low complexity).

This sequence belongs to the SlyX family.

In Rhodopseudomonas palustris (strain BisA53), this protein is Protein SlyX homolog.